Consider the following 60-residue polypeptide: Large ribosomal subunit protein bL32 (60 aa).

Positions 1 to 20 (MAVQKSRKSRSRRDMRRSHH) are enriched in basic residues. The tract at residues 1 to 22 (MAVQKSRKSRSRRDMRRSHHRM) is disordered.

This sequence belongs to the bacterial ribosomal protein bL32 family.

The polypeptide is Large ribosomal subunit protein bL32 (Psychrobacter arcticus (strain DSM 17307 / VKM B-2377 / 273-4)).